The chain runs to 107 residues: ESAT-6-like protein EsxD (107 aa).

The protein belongs to the WXG100 family. CFP-10 subfamily.

It is found in the secreted. The chain is ESAT-6-like protein EsxD from Mycobacterium tuberculosis (strain ATCC 25618 / H37Rv).